A 172-amino-acid polypeptide reads, in one-letter code: Peptide deformylase 1 (172 aa).

Fe cation-binding residues include Cys-91 and His-133. Residue Glu-134 is part of the active site. Position 137 (His-137) interacts with Fe cation.

It belongs to the polypeptide deformylase family. It depends on Fe(2+) as a cofactor.

The catalysed reaction is N-terminal N-formyl-L-methionyl-[peptide] + H2O = N-terminal L-methionyl-[peptide] + formate. Removes the formyl group from the N-terminal Met of newly synthesized proteins. Requires at least a dipeptide for an efficient rate of reaction. N-terminal L-methionine is a prerequisite for activity but the enzyme has broad specificity at other positions. This Vibrio parahaemolyticus serotype O3:K6 (strain RIMD 2210633) protein is Peptide deformylase 1.